The sequence spans 341 residues: MFVDKTLMITGGTGSFGNAVLSRFLKSDIINDIKEIRIFSRDEKKQEDMRIAFNNPKLKCYIGDVRNYKSIDEAMHGVDYVFHAAALKQVPTCEFYPMEAINTNVLGAENVLSAAINNKVTKVIVLSTDKAVYPINAMGLSKALMEKLAIAKARMRSPGETVLCVTRYGNVMASRGSVIPLFINQIKQGKELTITEPSMTRFLMSLVDSVDLVLYAFEHGHQGDIFVQKSPASTIEVLAKALQDIFDSKNEIRFIGTRHGEKHYESLVSSEEMAKADDLRDYYRIPMDGRDLNYAKYFVEGEKKVALLEDYTSHNTKRLNLEEVKELLLTLDYVQEELKNA.

This sequence belongs to the polysaccharide synthase family.

The enzyme catalyses UDP-alpha-D-glucose = UDP-alpha-D-galactose. Functionally, epimerizes UDP-galactose to UDP-glucose. This Rickettsia massiliae (strain Mtu5) protein is UDP-glucose 4-epimerase (capD).